Consider the following 159-residue polypeptide: uncharacterized protein (159 aa).

Belongs to the mimivirus L15/L51/R83 family.

This is an uncharacterized protein from Acanthamoeba polyphaga mimivirus (APMV).